A 2527-amino-acid chain; its full sequence is Neurogenic locus notch homolog protein 1 (2527 aa).

The first 36 residues, 1-36, serve as a signal peptide directing secretion; it reads MGRSDSRAGALLEGGCEQNIDPRRAAHCHHPRLATS. The Extracellular portion of the chain corresponds to 37-1741; it reads SLRCSQPSGT…VEPPLPSQLH (1705 aa). Intrachain disulfides connect C40–C53, C47–C62, C64–C73, C79–C90, C84–C103, C105–C114, C122–C133, C127–C143, C145–C154, C160–C171, C165–C180, C182–C191, C198–C211, C205–C220, C222–C231, C238–C249, C243–C259, C261–C270, C277–C288, C282–C297, C299–C308, C315–C328, C322–C337, C339–C348, C355–C366, C360–C375, C377–C386, C392–C403, C397–C414, C416–C425, C432–C445, C439–C454, and C456–C465. An N-linked (GlcNAc...) asparagine glycan is attached at N57. 3 EGF-like domains span residues 75–115, 118–155, and 156–192; these read DPNP…PLCL, LDNA…KSCQ, and QADP…PTCR. S81 carries an O-linked (Glc...) serine glycan. T89 carries O-linked (Fuc...) threonine glycosylation. T132 is a glycosylation site (O-linked (Fuc...) threonine). O-linked (Glc...) serine glycosylation is present at S162. The region spanning 194-232 is the EGF-like 4; calcium-binding domain; it reads DVNECSQNPGLCRHGGTCHNEIGSYRCVCRATHTGPHCE. T210 carries an O-linked (Fuc...) threonine glycan. Residues 234–271 enclose the EGF-like 5 domain; sequence PYVPCSPSPCQNGGTCRPTGDTTHECACLPGFAGQNCE. T248 carries an O-linked (Fuc...) threonine; alternate glycan. The O-linked (GalNAc...) threonine; alternate glycan is linked to T248. In terms of domain architecture, EGF-like 6; calcium-binding spans 273–309; sequence NVDDCPGNNCKNGGACVDGVNTYNCRCPPEWTGQYCT. One can recognise an EGF-like 7; calcium-binding domain in the interval 311-349; it reads DVDECQLMPNACQNGGTCHNTHGGYNCVCVNGWTGEDCS. O-linked (Fuc...) threonine glycosylation is present at T327. Residues 351–387 form the EGF-like 8; calcium-binding domain; it reads NIDDCASAACFQGATCHDRVASFYCECPHGRTGLLCH. Residue S357 is glycosylated (O-linked (Glc...) serine). The O-linked (Fuc...) threonine glycan is linked to T365. The EGF-like 9 domain maps to 388 to 426; sequence LNDACISNPCNEGSNCDTNPVNGKAICTCPSGYTGPACS. O-linked (Glc...) serine glycosylation is present at S394. The 39-residue stretch at 428–466 folds into the EGF-like 10; calcium-binding domain; the sequence is DVDECALGANPCEHAGKCLNTLGSFECQCLQGYTGPRCE. An interaction with DLL4 region spans residues 436–437; that stretch reads AN. Ca(2+) contacts are provided by T448 and S451. S451 carries O-linked (Glc...) serine glycosylation. Positions 464-468 are interaction with DLL4; sequence RCEID. Ca(2+) is bound by residues D468, V469, and E471. An EGF-like 11; calcium-binding domain is found at 468–504; sequence DVNECISNPCQNDATCLDQIGEFQCICMPGYEGVYCE. Intrachain disulfides connect C472/C483, C477/C492, and C494/C503. O-linked (Glc...) serine glycosylation occurs at S474. T482 carries an O-linked (Fuc...) threonine glycan. Residues D485 and Q486 each contribute to the Ca(2+) site. Ca(2+)-binding residues include N506, T507, and E509. The EGF-like 12; calcium-binding domain occupies 506–542; sequence NTDECASSPCLHNGHCMDKINEFLCQCPKGFSGHLCQ. 28 cysteine pairs are disulfide-bonded: C510–C521, C515–C530, C532–C541, C548–C559, C553–C568, C570–C579, C586–C596, C591–C605, C607–C616, C623–C634, C628–C643, C645–C654, C661–C671, C666–C680, C682–C691, C698–C709, C703–C718, C720–C729, C736–C746, C741–C755, C757–C766, C773–C784, C778–C793, C795–C804, C811–C822, C816–C831, C833–C842, and C849–C860. S512 carries O-linked (Glc...) serine glycosylation. The Ca(2+) site is built by D523 and K524. Positions 544–580 constitute an EGF-like 13; calcium-binding domain; that stretch reads DVDECASTPCKNGAKCLDGPNTYTCVCTEGYTGTHCE. Residue S550 is glycosylated (O-linked (Glc...) serine). The EGF-like 14; calcium-binding domain maps to 582–617; sequence DIDECDPDPCHYGFCKDGVATFTCLCQPGYTGHHCE. Residues 619–655 enclose the EGF-like 15; calcium-binding domain; the sequence is NINECHSQPCRHGGTCQDRDNSYLCLCLKGTTGPNCE. Residue S625 is glycosylated (O-linked (Glc...) serine). T633 carries O-linked (Fuc...) threonine glycosylation. One can recognise an EGF-like 16; calcium-binding domain in the interval 657 to 692; that stretch reads NLDDCASNPCDSGTCLDKIDGYECACEPGYTGSMCN. The O-linked (Glc...) serine glycan is linked to S663. The EGF-like 17; calcium-binding domain maps to 694–730; the sequence is NIDECAGSPCHNGGTCEDGIAGFTCRCPEGYHDPTCL. O-linked (Fuc...) threonine glycosylation is present at T708. In terms of domain architecture, EGF-like 18; calcium-binding spans 732-767; that stretch reads EVNECNSNPCIHGACRDGLNGYKCDCAPGWSGTNCD. The O-linked (Glc...) serine glycan is linked to S738. The 37-residue stretch at 769–805 folds into the EGF-like 19 domain; the sequence is NNNECESNPCVNGGTCKDMTSGYVCTCREGFSGPNCQ. S775 carries an O-linked (Glc...) serine glycan. A glycan (O-linked (Fuc...) threonine) is linked at T783. An O-linked (GlcNAc) serine glycan is attached at S800. Residues 807–843 enclose the EGF-like 20; calcium-binding domain; it reads NINECASNPCLNQGTCIDDVAGYKCNCPLPYTGATCE. The O-linked (Glc...) serine glycan is linked to S813. T821 is a glycosylation site (O-linked (Fuc...) threonine). In terms of domain architecture, EGF-like 21 spans 845–883; the sequence is VLAPCATSPCKNSGVCKESEDYESFSCVCPTGWQGQTCE. Residues 885–921 enclose the EGF-like 22; calcium-binding domain; sequence DINECVKSPCRHGASCQNTNGSYRCLCQAGYTGRNCE. N-linked (GlcNAc...) asparagine glycosylation is present at N904. A glycan (O-linked (GlcNAc) threonine) is linked at T916. The EGF-like 23 domain maps to 923-959; that stretch reads DIDDCRPNPCHNGGSCTDGINMAFCDCLPGFQGAFCE. S937 carries O-linked (Fuc) serine glycosylation. The EGF-like 24; calcium-binding domain occupies 961-997; the sequence is DINECASNPCRNGANCTDCVDSYTCTCPAGFNGIHCE. O-linked (Glc...) serine glycosylation is present at S967. An N-linked (GlcNAc...) asparagine glycan is attached at N975. 5 consecutive EGF-like domains span residues 999 to 1035, 1037 to 1073, 1075 to 1111, 1113 to 1159, and 1161 to 1197; these read NTPD…SYCQ, DVNE…LNCQ, LVHW…FNCD, LSVS…SYCE, and EVDE…SNCS. O-linked (Fuc...) threonine glycosylation occurs at T1013. The O-linked (Glc...) serine glycan is linked to S1043. T1051 carries an O-linked (Fuc...) threonine glycan. An O-linked (Glc...) serine glycan is attached at S1081. C1117 and C1138 are disulfide-bonded. O-linked (Fuc...) threonine glycosylation occurs at T1175. Residue N1195 is glycosylated (N-linked (GlcNAc...) asparagine). Positions 1199–1235 constitute an EGF-like 30; calcium-binding domain; sequence EINECLSQPCQNGGTCIDLTNTYKCSCPRGTQGVHCE. S1205 carries O-linked (Glc...) serine glycosylation. O-linked (Fuc...) threonine glycosylation is present at T1213. The EGF-like 31; calcium-binding domain occupies 1237 to 1281; the sequence is NVDDCHPHLDPASRSPKCFNNGTCVDQVGGYSCTCPPGFVGERCE. A glycan (N-linked (GlcNAc...) asparagine) is linked at N1257. EGF-like domains are found at residues 1283–1321, 1323–1362, 1364–1400, and 1403–1442; these read DINE…RRCE, VING…ATCE, DART…PECQ, and ASSP…LLCH. O-linked (Glc...) serine glycosylation occurs at S1289. A glycan (O-linked (Fuc...) threonine) is linked at T1378. T1395 carries an O-linked (GlcNAc...) threonine glycan. T1418 carries O-linked (Fuc...) threonine; alternate glycosylation. Residue T1418 is glycosylated (O-linked (GalNAc...) threonine; alternate). LNR repeat units lie at residues 1465 to 1505, 1506 to 1547, and 1548 to 1587; these read CELP…PWKN, CTQS…CNPL, and YDQY…RLAA. 4 residues coordinate Ca(2+): D1473, N1476, D1491, and D1494. An N-linked (GlcNAc...) asparagine glycan is attached at N1505. N1603 is a glycosylation site (N-linked (GlcNAc...) asparagine). O-linked (GalNAc...) threonine glycosylation is present at T1731. The tract at residues 1734 to 1766 is interaction with PSEN1; the sequence is PPLPSQLHLMYLAAAAFVLLFFVGCGVLLSRKR. Residues 1742-1762 traverse the membrane as a helical segment; the sequence is LMYLAAAAFVLLFFVGCGVLL. Residues 1763 to 2527 are Cytoplasmic-facing; it reads SRKRRRQHGQ…QITHIPEAFK (765 aa). A Glycyl lysine isopeptide (Lys-Gly) (interchain with G-Cter in ubiquitin) cross-link involves residue K1765. Positions 1786–1814 are disordered; sequence KKKRREPLGEDSVGLKPLKNASDGALMDD. T1867 carries the post-translational modification Phosphothreonine. ANK repeat units follow at residues 1933–1962, 1966–1996, 2000–2029, 2033–2062, and 2066–2095; these read TGET…DANI, MGRT…DLDA, DGTT…DVNA, LGKS…NKDM, and KEET…NRDI. The segment at 1953–1961 is HIF1AN-binding; that stretch reads LLEASADAN. The residue at position 1961 (N1961) is a (3S)-3-hydroxyasparagine; by HIF1AN; partial. Positions 2020-2028 are HIF1AN-binding; that stretch reads LINSHADVN. The residue at position 2028 (N2028) is a (3S)-3-hydroxyasparagine; by HIF1AN. 3 disordered regions span residues 2157 to 2201, 2378 to 2424, and 2436 to 2527; these read SATQ…DSSS, QPQN…SLPV, and PTSL…EAFK. The segment covering 2378-2391 has biased composition (low complexity); the sequence is QPQNLQPPSQPHLS. Residues 2436–2474 are compositionally biased toward polar residues; sequence PTSLPSSMVPPMTTTQFLTPPSQHSYSSSPVDNTPSHQL. The segment covering 2484–2499 has biased composition (low complexity); sequence PSPESPDQWSSSSPHS. Residues 2500-2520 show a composition bias toward polar residues; it reads NISDWSEGISSPPTSMPSQIT.

The protein belongs to the NOTCH family. In terms of assembly, heterodimer of a C-terminal fragment N(TM) and an N-terminal fragment N(EC) which are probably linked by disulfide bonds. Interacts with DNER, DTX1, DTX2 and RBPJ/RBPSUH. Also interacts with MAML1, MAML2 and MAML3 which act as transcriptional coactivators for NOTCH1. Notch 1 intracellular domain interacts with SNW1; the interaction involves multimerized NOTCH1 NICD and is implicated in a formation of an intermediate preactivation complex which associates with DNA-bound CBF-1/RBPJ. The activated membrane-bound form interacts with AAK1 which promotes NOTCH1 stabilization. Forms a trimeric complex with FBXW7 and SGK1. Interacts with HIF1AN. HIF1AN negatively regulates the function of notch intracellular domain (NICD), accelerating myogenic differentiation. Interacts (via NICD) with SNAI1 (via zinc fingers); the interaction induces SNAI1 degradation via MDM2-mediated ubiquitination and inhibits SNAI1-induced cell invasion. Interacts (via NICD) with MDM2A. Interacts (via NICD) with BCL6; the interaction decreases MAML1 recruitment by NOTCH1 NICD on target genes DNA and inhibits NOTCH1 transactivation activity. Interacts with THBS4. Interacts (via the EGF-like repeat region) with CCN3 (via CTCK domain). Interacts (via EGF-like domains) with DLL4 (via N-terminal DSL and MNNL domains). Interacts with ZMIZ1. Interacts (via NICD domain) with MEGF10 (via the cytoplasmic domain). Interacts with DLL1 and JAG1. Interacts (via NICD domain) with PRAG1. Forms a complex with PRAG1, N1ICD and MAML1, in a MAML1-dependent manner. Interacts (via transmembrane region) with PSEN1; the interaction is direct. Interacts with ZFP64. Synthesized in the endoplasmic reticulum as an inactive form which is proteolytically cleaved by a furin-like convertase in the trans-Golgi network before it reaches the plasma membrane to yield an active, ligand-accessible form. Cleavage results in a C-terminal fragment N(TM) and a N-terminal fragment N(EC). Following ligand binding, it is cleaved by ADAM17 to yield a membrane-associated intermediate fragment called notch extracellular truncation (NEXT). Following endocytosis, this fragment is then cleaved by one of the catalytic subunits of gamma-secretase (PSEN1 or PSEN2) to release a Notch-derived peptide containing the intracellular domain (NICD) from the membrane. Post-translationally, phosphorylated. In terms of processing, O-linked glycosylation by GALNT11 is involved in determination of left/right symmetry: glycosylation promotes activation of NOTCH1, possibly by promoting cleavage by ADAM17, modulating the balance between motile and immotile (sensory) cilia at the left-right organiser (LRO). O-glycosylated on the EGF-like domains. O-glucosylated at Ser-451 by KDELC1 and KDELC2. Contains both O-linked fucose and O-linked glucose in the EGF-like domains 11, 12 and 13, which are interacting with the residues on DLL4. MFNG-, RFNG- and LFNG-mediated modification of O-fucose residues at specific EGF-like domains results in inhibition of its activation by JAG1 and enhancement of its activation by DLL1 via an increased binding to DLL1. Ubiquitinated. Undergoes 'Lys-29'-linked polyubiquitination by ITCH; promotes the lysosomal degradation of non-activated internalized NOTCH1. Deubiquitination by USP12 is required for transport of internalized non-activated receptor from late endosomes to lysosomes for degradation. Monoubiquitination at Lys-1765 is required for activation by gamma-secretase cleavage, it promotes interaction with AAK1, which stabilizes it. Deubiquitination by EIF3F is necessary for nuclear import of activated Notch. Post-translationally, hydroxylated at Asn-1961 by HIF1AN. Hydroxylated at Asn-2028 by HIF1AN. Hydroxylation reduces affinity for HI1AN and may thus indirectly modulate negative regulation of NICD.

It is found in the cell membrane. The protein resides in the late endosome membrane. Its subcellular location is the nucleus. Its function is as follows. Functions as a receptor for membrane-bound ligands Jagged-1 (JAG1), Jagged-2 (JAG2) and Delta-1 (DLL1) to regulate cell-fate determination. Upon ligand activation through the released notch intracellular domain (NICD) it forms a transcriptional activator complex with RBPJ/RBPSUH and activates genes of the enhancer of split locus. Affects the implementation of differentiation, proliferation and apoptotic programs. Involved in angiogenesis; negatively regulates endothelial cell proliferation and migration and angiogenic sprouting. Involved in the maturation of both CD4(+) and CD8(+) cells in the thymus. Important for follicular differentiation and possibly cell fate selection within the follicle. During cerebellar development, functions as a receptor for neuronal DNER and is involved in the differentiation of Bergmann glia. Represses neuronal and myogenic differentiation. May play an essential role in postimplantation development, probably in some aspect of cell specification and/or differentiation. May be involved in mesoderm development, somite formation and neurogenesis. May enhance HIF1A function by sequestering HIF1AN away from HIF1A. Required for the THBS4 function in regulating protective astrogenesis from the subventricular zone (SVZ) niche after injury. Involved in determination of left/right symmetry by modulating the balance between motile and immotile (sensory) cilia at the left-right organiser (LRO). The polypeptide is Neurogenic locus notch homolog protein 1 (NOTCH1) (Cricetulus griseus (Chinese hamster)).